Consider the following 622-residue polypeptide: Probable ATP-citrate synthase (622 aa).

ATP-binding positions include 228–248 (ALRY…ELGG) and 279–305 (FPTE…KNKA). E245 serves as a coordination point for Mg(2+). H287 functions as the Tele-phosphohistidine intermediate in the catalytic mechanism. 306–316 (LREAGAVVPTS) is a CoA binding site.

In the N-terminal section; belongs to the succinate/malate CoA ligase beta subunit family. This sequence in the C-terminal section; belongs to the succinate/malate CoA ligase alpha subunit family. As to quaternary structure, homotetramer.

Its subcellular location is the cytoplasm. It catalyses the reaction oxaloacetate + acetyl-CoA + ADP + phosphate = citrate + ATP + CoA. Functionally, catalyzes the cleavage of citrate into oxaloacetate and acetyl-CoA, the latter serving as common substrate in multiple biochemical reactions in protein, carbohydrate and lipid metabolism. The sequence is that of Probable ATP-citrate synthase (acly) from Dictyostelium discoideum (Social amoeba).